A 218-amino-acid chain; its full sequence is Protein OPG170 (218 aa).

Residues 1–16 (MYSLVFVILMCIPFSF) form the signal peptide. N-linked (GlcNAc...) asparagine; by host glycosylation occurs at asparagine 70.

The protein belongs to the orthopoxvirus OPG170 family.

It localises to the secreted. In terms of biological role, may interact with several cellular chemokines to interfere with chemokine-glycosaminoglycan (GAG) interactions at the cell surface to alter chemotaxis of nearby responsive cells. The sequence is that of Protein OPG170 (OPG170) from Homo sapiens (Human).